The sequence spans 148 residues: 3-dehydroquinate dehydratase (148 aa).

Tyr23 (proton acceptor) is an active-site residue. Substrate contacts are provided by Asn75, His81, and Asp88. His101 acts as the Proton donor in catalysis. Residues 102-103 (LS) and Arg112 each bind substrate.

Belongs to the type-II 3-dehydroquinase family. As to quaternary structure, homododecamer.

The enzyme catalyses 3-dehydroquinate = 3-dehydroshikimate + H2O. It functions in the pathway metabolic intermediate biosynthesis; chorismate biosynthesis; chorismate from D-erythrose 4-phosphate and phosphoenolpyruvate: step 3/7. In terms of biological role, catalyzes a trans-dehydration via an enolate intermediate. This chain is 3-dehydroquinate dehydratase, found in Xanthomonas oryzae pv. oryzae (strain MAFF 311018).